Consider the following 295-residue polypeptide: 4-hydroxy-tetrahydrodipicolinate synthase (295 aa).

Thr48 provides a ligand contact to pyruvate. Residue Tyr135 is the Proton donor/acceptor of the active site. Residue Lys163 is the Schiff-base intermediate with substrate of the active site. Val204 contacts pyruvate.

It belongs to the DapA family. As to quaternary structure, homotetramer; dimer of dimers.

Its subcellular location is the cytoplasm. The enzyme catalyses L-aspartate 4-semialdehyde + pyruvate = (2S,4S)-4-hydroxy-2,3,4,5-tetrahydrodipicolinate + H2O + H(+). It functions in the pathway amino-acid biosynthesis; L-lysine biosynthesis via DAP pathway; (S)-tetrahydrodipicolinate from L-aspartate: step 3/4. Its function is as follows. Catalyzes the condensation of (S)-aspartate-beta-semialdehyde [(S)-ASA] and pyruvate to 4-hydroxy-tetrahydrodipicolinate (HTPA). This is 4-hydroxy-tetrahydrodipicolinate synthase from Francisella tularensis subsp. novicida (strain U112).